A 422-amino-acid polypeptide reads, in one-letter code: Dipeptidase aclJ (422 aa).

Residues 28–45 traverse the membrane as a helical segment; it reads LAYSVTLTLVALFFTFAL. Residues His-77 and Asp-79 each coordinate Zn(2+). An N-linked (GlcNAc...) asparagine glycan is attached at Asn-96. Cys-128 and Cys-219 form a disulfide bridge. Position 190 (Glu-190) interacts with Zn(2+). Substrate is bound at residue His-217. A glycan (N-linked (GlcNAc...) asparagine) is linked at Asn-270. Cys-287 and Cys-319 are disulfide-bonded. Residues Arg-291 and Asp-351 each contribute to the substrate site.

This sequence belongs to the metallo-dependent hydrolases superfamily. Peptidase M19 family. Requires Zn(2+) as cofactor.

Its subcellular location is the membrane. The catalysed reaction is an L-aminoacyl-L-amino acid + H2O = 2 an L-alpha-amino acid. The protein operates within mycotoxin biosynthesis. Dipeptidase; part of the gene cluster that mediates the biosynthesis of aspirochlorine (or antibiotic A30641), an unusual halogenated spiro compound with distinctive antifungal properties due to selective inhibition of protein biosynthesis, and which is also active against bacteria, viruses, and murine tumor cells. The non-ribosomal peptide synthetase (NRPS) aclP is responsible the formation of the diketopiperazine (DKP) core from the condensation of 2 phenylalanine residues. One Phe residue is tailored into chlorotyrosine by hydroxylation and chlorination, whereas the second Phe undergoes an unprecedented C-C bond cleavage to be converted into glycine. After formation of the DKP, sulfur is incorporated into the DKP by conjugation with glutathione by aclG, followed by its stepwise degradation to the thiol by aclI, aclJ and aclK, and the dithiol oxidation by aclT. In addition, oxygenases (aclB, aclC, aclL and aclO) and O-methyltransferases (aclM and aclU) act as tailoring enzymes to produce the intermediate dechloroaspirochlorine. Ultimately, chlorination of dechloroaspirochlorine by the halogenase aclH is the last step in the aspirochlorine pathway. The polypeptide is Dipeptidase aclJ (Aspergillus oryzae (strain ATCC 42149 / RIB 40) (Yellow koji mold)).